A 266-amino-acid polypeptide reads, in one-letter code: 4-hydroxy-tetrahydrodipicolinate reductase (266 aa).

NAD(+) is bound at residue 10–15; the sequence is GPRGRM. Lys-38 is a binding site for NADP(+). Residues 99–101 and 125–128 contribute to the NAD(+) site; these read GTT and APNF. Residue His-155 is the Proton donor/acceptor of the active site. (S)-2,3,4,5-tetrahydrodipicolinate is bound at residue His-156. Catalysis depends on Lys-159, which acts as the Proton donor. 165–166 is a (S)-2,3,4,5-tetrahydrodipicolinate binding site; that stretch reads GT.

It belongs to the DapB family.

Its subcellular location is the cytoplasm. It catalyses the reaction (S)-2,3,4,5-tetrahydrodipicolinate + NAD(+) + H2O = (2S,4S)-4-hydroxy-2,3,4,5-tetrahydrodipicolinate + NADH + H(+). The catalysed reaction is (S)-2,3,4,5-tetrahydrodipicolinate + NADP(+) + H2O = (2S,4S)-4-hydroxy-2,3,4,5-tetrahydrodipicolinate + NADPH + H(+). It functions in the pathway amino-acid biosynthesis; L-lysine biosynthesis via DAP pathway; (S)-tetrahydrodipicolinate from L-aspartate: step 4/4. In terms of biological role, catalyzes the conversion of 4-hydroxy-tetrahydrodipicolinate (HTPA) to tetrahydrodipicolinate. This Bacillus cereus (strain ATCC 14579 / DSM 31 / CCUG 7414 / JCM 2152 / NBRC 15305 / NCIMB 9373 / NCTC 2599 / NRRL B-3711) protein is 4-hydroxy-tetrahydrodipicolinate reductase.